A 277-amino-acid chain; its full sequence is Small ribosomal subunit protein uS3 (277 aa).

The region spanning isoleucine 38–lysine 106 is the KH type-2 domain. The segment at alanine 217 to serine 277 is disordered. Positions alanine 225–alanine 235 are enriched in basic and acidic residues. Over residues serine 242–threonine 261 the composition is skewed to low complexity.

The protein belongs to the universal ribosomal protein uS3 family. In terms of assembly, part of the 30S ribosomal subunit. Forms a tight complex with proteins S10 and S14.

Binds the lower part of the 30S subunit head. Binds mRNA in the 70S ribosome, positioning it for translation. This Mycobacteroides abscessus (strain ATCC 19977 / DSM 44196 / CCUG 20993 / CIP 104536 / JCM 13569 / NCTC 13031 / TMC 1543 / L948) (Mycobacterium abscessus) protein is Small ribosomal subunit protein uS3.